Consider the following 147-residue polypeptide: Ribonuclease H (147 aa).

Mg(2+) contacts are provided by aspartate 8, glutamate 46, aspartate 68, and aspartate 132.

This sequence belongs to the RNase H family. In terms of assembly, monomer. Requires Mg(2+) as cofactor.

The protein localises to the cytoplasm. The enzyme catalyses Endonucleolytic cleavage to 5'-phosphomonoester.. Functionally, endonuclease that specifically degrades the RNA of RNA-DNA hybrids. In Geotalea uraniireducens (strain Rf4) (Geobacter uraniireducens), this protein is Ribonuclease H.